A 215-amino-acid polypeptide reads, in one-letter code: Probable phosphoglycerate mutase GpmB (215 aa).

Substrate-binding positions include arginine 8–asparagine 15, glutamine 21–glycine 22, arginine 58, arginine 60, glutamate 82–methionine 85, arginine 104–arginine 105, and glycine 151–isoleucine 152. Histidine 9 acts as the Tele-phosphohistidine intermediate in catalysis. Glutamate 82 acts as the Proton donor/acceptor in catalysis.

It belongs to the phosphoglycerate mutase family. GpmB subfamily.

It carries out the reaction (2R)-2-phosphoglycerate = (2R)-3-phosphoglycerate. It functions in the pathway carbohydrate degradation; glycolysis; pyruvate from D-glyceraldehyde 3-phosphate: step 3/5. This Citrobacter koseri (strain ATCC BAA-895 / CDC 4225-83 / SGSC4696) protein is Probable phosphoglycerate mutase GpmB.